Reading from the N-terminus, the 1149-residue chain is Protogenin A (1149 aa).

The first 23 residues, 1-23 (MASFKRDLYLFLAVFLSISGVWS), serve as a signal peptide directing secretion. Residues 24–932 (FSELFFIKEP…GFYHLDQRSM (909 aa)) are Extracellular-facing. Ig-like domains lie at 27–117 (LFFI…ARLT), 122–209 (STFT…ATLT), 222–309 (PRII…ANIT), and 314–399 (PSLV…RLIV). 2 disulfide bridges follow: Cys48–Cys100 and Cys143–Cys192. Residue Asn78 is glycosylated (N-linked (GlcNAc...) asparagine). Asn230 is a glycosylation site (N-linked (GlcNAc...) asparagine). Cys243 and Cys291 are disulfide-bonded. N-linked (GlcNAc...) asparagine glycosylation is found at Asn300 and Asn307. Residues Cys335 and Cys382 are joined by a disulfide bond. 5 Fibronectin type-III domains span residues 408-502 (APRN…TLED), 504-600 (PLRA…TPKA), 605-704 (VPLA…VRDR), 711-804 (PPHH…TLPE), and 809-905 (APVG…IHTD). 2 N-linked (GlcNAc...) asparagine glycosylation sites follow: Asn460 and Asn475. Asn617 carries N-linked (GlcNAc...) asparagine glycosylation. Positions 646-666 (GQSEAAQAQIPPHHRQHTIGG) are disordered. N-linked (GlcNAc...) asparagine glycosylation is found at Asn720, Asn741, and Asn753. A helical transmembrane segment spans residues 933–953 (AGIAVGVCIALTCIIICILIL). The Cytoplasmic segment spans residues 954 to 1149 (ACRSKTRKSC…EQEMTDLHPV (196 aa)). Positions 1060–1149 (YTETSPENPP…EQEMTDLHPV (90 aa)) are disordered. Positions 1061-1073 (TETSPENPPTTLQ) are enriched in polar residues. A compositionally biased stretch (basic and acidic residues) spans 1084 to 1106 (EGSHSSEGSHETSDSGRYSHDDT).

It belongs to the immunoglobulin superfamily. DCC family. As to expression, expression begins in the posterior region of the embryo and this posterior restriction persists at the 4 s stage. At early somite stages, expressed along the neural tube with lower levels in the lateral and paraxial mesoderm. Expression decreases caudally and rostrally becomes restricted to the ventral part of the brain. Widespread in the spinal cord at 30 hours post-fertilization (hpf) and is also expressed in the lens from this time. At 40 hpf, expression is restricted to the lens.

The protein resides in the membrane. Functionally, may play a role in anteroposterior axis elongation. This Danio rerio (Zebrafish) protein is Protogenin A.